The sequence spans 187 residues: MSLINTQVQPFKVNAFHNGKFIEVTEESLKGKWSVLIFMPAAFTFNCPTEIEDAANNYGEFQKAGAEVYIVTTDTHFSHKVWHETSPAVGKAQFPLIGDPTHQLTNAFGVHIPEEGLALRGTFVINPEGVIKTVEIHSNEIARDVGETVRKLKAAQYTAAHPGEVCPAKWKEGEKTLAPSLDLVGKI.

In terms of domain architecture, Thioredoxin spans 2–157; it reads SLINTQVQPF…TVRKLKAAQY (156 aa). Cys47 acts as the Cysteine sulfenic acid (-SOH) intermediate in catalysis.

Belongs to the peroxiredoxin family. AhpC/Prx1 subfamily. In terms of assembly, homodimer; disulfide-linked, upon oxidation. 5 homodimers assemble to form a ring-like decamer.

The protein localises to the cytoplasm. It localises to the secreted. It carries out the reaction a hydroperoxide + NADH + H(+) = an alcohol + NAD(+) + H2O. Functionally, thiol-specific peroxidase that catalyzes the reduction of hydrogen peroxide and organic hydroperoxides to water and alcohols, respectively. Plays a role in cell protection against oxidative stress by detoxifying peroxides. The sequence is that of Alkyl hydroperoxide reductase C (ahpC) from Pseudomonas aeruginosa (strain UCBPP-PA14).